The sequence spans 241 residues: Orotidine 5'-phosphate decarboxylase (241 aa).

Residues Asp-15, Lys-37, 64–73 (DLKYHDIPNT), Thr-126, Arg-187, Gln-196, Gly-216, and Arg-217 contribute to the substrate site. The Proton donor role is filled by Lys-66.

It belongs to the OMP decarboxylase family. Type 1 subfamily. As to quaternary structure, homodimer.

The catalysed reaction is orotidine 5'-phosphate + H(+) = UMP + CO2. Its pathway is pyrimidine metabolism; UMP biosynthesis via de novo pathway; UMP from orotate: step 2/2. In terms of biological role, catalyzes the decarboxylation of orotidine 5'-monophosphate (OMP) to uridine 5'-monophosphate (UMP). The chain is Orotidine 5'-phosphate decarboxylase from Trichlorobacter lovleyi (strain ATCC BAA-1151 / DSM 17278 / SZ) (Geobacter lovleyi).